The primary structure comprises 932 residues: AP-3 complex subunit delta (932 aa).

Threonine 2 is subject to N-acetylthreonine. HEAT repeat units lie at residues 157-194 (SLAR…QYPE), 196-231 (LRDN…KNPQ), 233-269 (FIQL…VEPK), 270-307 (LRAK…LEED), 310-346 (ETAM…KINT), 347-384 (DFIS…EDNL), 386-425 (AIVQ…ENYK), 427-466 (KMVN…DISD), 490-527 (VTIA…TLVE), 528-564 (NGND…NWCN), 570-601 (KRFE…ERSV), and 602-638 (EVLE…AYEL). Phosphoserine is present on residues serine 700 and serine 727. The segment at 720–868 (EREKERMSNP…EEGNLRKEDE (149 aa)) is disordered. 2 stretches are compositionally biased toward basic and acidic residues: residues 738-747 (ERTKNSKDLL) and 755-766 (SDKKPETIRLNR). At threonine 767 the chain carries Phosphothreonine. Over residues 767 to 779 (TDNSLNSLSLSTT) the composition is skewed to low complexity. Phosphoserine is present on residues serine 770 and serine 773. Residues 783-793 (RKKKKGKKKNR) are compositionally biased toward basic residues. Phosphoserine is present on serine 798. Residues 806–832 (APKRKDAFQKPHDNHSTQNPLKKDKIN) are compositionally biased toward basic and acidic residues. The segment covering 838 to 855 (QLENFDFSNFGQSSNAGR) has biased composition (polar residues). Over residues 857–868 (SQEEGNLRKEDE) the composition is skewed to basic and acidic residues. Residues 858-878 (QEEGNLRKEDELELSRLEANL) adopt a coiled-coil conformation. Position 888 is a phosphoserine (serine 888). Positions 897–915 (KKKKKGKKSKSKNKLKTKA) are enriched in basic residues. The tract at residues 897 to 932 (KKKKKGKKSKSKNKLKTKAKNSPEPNEFLRDQSTDI) is disordered. Serine 918 bears the Phosphoserine mark. Residues 923-932 (EFLRDQSTDI) are compositionally biased toward basic and acidic residues.

Belongs to the adaptor complexes large subunit family. As to quaternary structure, adaptor protein complex 3 (AP-3) is a heterotetramer composed of 2 large adaptins (APL5 and APL6), a medium adaptin (APM3) and a small adaptin (APS3). Interacts with VPS41.

The protein resides in the golgi apparatus. It is found in the cytoplasmic vesicle. Its subcellular location is the clathrin-coated vesicle membrane. Functionally, part of the AP-3 complex, an adaptor-related complex which is not clathrin-associated. The complex is associated with the Golgi region as well as more peripheral structures. It facilitates the budding of vesicles from the Golgi membrane and may be directly involved in trafficking to the vacuole. Required for the transport via the ALP pathway, which directs the transport of the cargo proteins PHO8 and VAM3 to the vacuole. The protein is AP-3 complex subunit delta (APL5) of Saccharomyces cerevisiae (strain ATCC 204508 / S288c) (Baker's yeast).